Consider the following 707-residue polypeptide: Phosphoprotein (707 aa).

The tract at residues 1-35 is N0 binding; sequence MDKLDLVNDGLDIIDFIQKNQKEIQKTYGRSSIQQ. 4 disordered regions span residues 26–103, 193–229, 254–446, and 454–473; these read KTYG…EDPD, FVPKNQSTPTEEPPVIPEYYYGSGRRGDLSKSPPRGN, FAKS…AENV, and VTRNEGHDQEVTSNEDSLDD. Composition is skewed to polar residues over residues 28-37 and 77-96; these read YGRSSIQQPS and DLSSVTSSDGTIGQRVSNTR. Serine 257 is modified (phosphoserine; by host). Residues 296–317 show a composition bias toward basic and acidic residues; that stretch reads FPEKEETPDVRRKDSLMQDSCK. A Phosphoserine; by host modification is found at serine 350. The span at 435–446 shows a compositional bias: polar residues; sequence NQESKSVTAENV. A multimerization region spans residues 473–578; that stretch reads DKYIMPSDDF…LVSMMIMIPG (106 aa).

Homotetramer. Interacts (via multimerization domain) with polymerase L; this interaction forms the polymerase L-P complex. Interacts (via N-terminus) with N0 (via Ncore); this interaction allows P to chaperon N0 to avoid N polymerization before encapsidation. Interacts (via C-terminus) with N-RNA template; this interaction positions the polymerase on the template for both transcription and replication.

Essential cofactor of the RNA polymerase L that plays a central role in the transcription and replication by forming the polymerase complex with RNA polymerase L and recruiting L to the genomic N-RNA template for RNA synthesis. Also plays a central role in the encapsidation of nascent RNA chains by forming the encapsidation complex with the nucleocapsid protein N (N-P complex). Acts as a chaperone for newly synthesized free N protein, so-called N0, allowing encapsidation of nascent RNA chains during replication. The nucleoprotein protein N prevents excessive phosphorylation of P, which leads to down-regulation of viral transcription/ replication. Participates, together with N, in the formation of viral factories (viroplasms), which are large inclusions in the host cytoplasm where replication takes place. This chain is Phosphoprotein (P/V/C), found in Equus caballus (Horse).